The following is a 279-amino-acid chain: MTNIHPTAIIEPGAKIGKNVVIEPYVVIKSTVTLCDDVVVKSYAYIDGHTTIGKGTTIWPSAMIGNKPQDLKYQGEKTYVTIGENCEIREFAIITSSTFEGTTVSIGNNCLIMPWAHVAHNCTIGNYVILSNHAQLAGHVVVEDYAIIGGMVGVHQFVRIGAHAMVGALSGIRRDVPPYTIGTGNPYQLGGINKVGLQRRQVPFETRLALIKVFKKVYRSEDSFSESLLEAQEEYGHIPEVQNFIHFCQNPSKRGIERGADKDALQDESVEKEGALVES.

Residues 256–279 (IERGADKDALQDESVEKEGALVES) form a disordered region.

This sequence belongs to the transferase hexapeptide repeat family. LpxA subfamily. Homotrimer.

The protein localises to the cytoplasm. The catalysed reaction is a (3R)-hydroxyacyl-[ACP] + UDP-N-acetyl-alpha-D-glucosamine = a UDP-3-O-[(3R)-3-hydroxyacyl]-N-acetyl-alpha-D-glucosamine + holo-[ACP]. It functions in the pathway glycolipid biosynthesis; lipid IV(A) biosynthesis; lipid IV(A) from (3R)-3-hydroxytetradecanoyl-[acyl-carrier-protein] and UDP-N-acetyl-alpha-D-glucosamine: step 1/6. Functionally, involved in the biosynthesis of lipid A, a phosphorylated glycolipid that anchors the lipopolysaccharide to the outer membrane of the cell. In Chlamydia caviae (strain ATCC VR-813 / DSM 19441 / 03DC25 / GPIC) (Chlamydophila caviae), this protein is Acyl-[acyl-carrier-protein]--UDP-N-acetylglucosamine O-acyltransferase.